A 450-amino-acid chain; its full sequence is Gluconate permease (450 aa).

The next 12 membrane-spanning stretches (helical) occupy residues 6–26, 30–50, 60–80, 116–136, 142–162, 183–203, 233–253, 269–289, 312–332, 338–358, 366–386, and 430–450; these read HDAY…VLIT, VHPF…SGMP, DGFG…TMLG, VGIP…VFIV, VSLI…HGLV, ILYG…LFGA, FGVT…KTFA, MIGH…YTFG, AIVM…ASGV, HLAV…AAVI, TVAT…IPGV, and AMET…SLVL.

The protein belongs to the GntP permease family.

It is found in the cell inner membrane. It functions in the pathway carbohydrate acid metabolism; D-gluconate degradation. In Pseudomonas aeruginosa (strain ATCC 15692 / DSM 22644 / CIP 104116 / JCM 14847 / LMG 12228 / 1C / PRS 101 / PAO1), this protein is Gluconate permease (gnuT).